The sequence spans 553 residues: Formate--tetrahydrofolate ligase (553 aa).

ATP is bound at residue 65–72 (TPAGEGKS).

Belongs to the formate--tetrahydrofolate ligase family.

The catalysed reaction is (6S)-5,6,7,8-tetrahydrofolate + formate + ATP = (6R)-10-formyltetrahydrofolate + ADP + phosphate. The protein operates within one-carbon metabolism; tetrahydrofolate interconversion. The protein is Formate--tetrahydrofolate ligase of Brachyspira hyodysenteriae (strain ATCC 49526 / WA1).